The following is a 777-amino-acid chain: 1,4-alpha-glucan branching enzyme GlgB (777 aa).

Asp408 (nucleophile) is an active-site residue. Catalysis depends on Glu461, which acts as the Proton donor.

This sequence belongs to the glycosyl hydrolase 13 family. GlgB subfamily. In terms of assembly, monomer.

The catalysed reaction is Transfers a segment of a (1-&gt;4)-alpha-D-glucan chain to a primary hydroxy group in a similar glucan chain.. It participates in glycan biosynthesis; glycogen biosynthesis. In terms of biological role, catalyzes the formation of the alpha-1,6-glucosidic linkages in glycogen by scission of a 1,4-alpha-linked oligosaccharide from growing alpha-1,4-glucan chains and the subsequent attachment of the oligosaccharide to the alpha-1,6 position. This is 1,4-alpha-glucan branching enzyme GlgB from Actinobacillus pleuropneumoniae serotype 7 (strain AP76).